Here is a 728-residue protein sequence, read N- to C-terminus: Peroxisome biogenesis protein 5 (728 aa).

Positions 1–58 (MAMRDLVNGGAACAVPGSSSSSNPLGALTNALLGSSSKTQERLKEIPNANRSGPRPQF) are disordered. The tract at residues 11 to 97 (AACAVPGSSS…FRGFRSVDQN (87 aa)) is amphipathic helix 1 (AH1). Cys13 participates in a covalent cross-link: Glycyl cysteine thioester (Cys-Gly) (interchain with G-Cter in ubiquitin). 3 consecutive repeat copies span residues 240-244 (WAAEF), 257-261 (WVQSF), and 270-274 (WATEF). 3 consecutive short sequence motifs (wxxxF/Y motif) follow at residues 240–244 (WAAEF), 257–261 (WVQSF), and 270–274 (WATEF). The segment at 288-311 (SMDMQNIAAMEQTRKLAHTLSQDG) is amphipathic helix 3 (AH3). Repeat copies occupy residues 348 to 352 (WATEY), 362 to 366 (WADQF), 378 to 382 (WADEF), 396 to 400 (WVNEF), 408 to 412 (WIDEF), and 425 to 429 (WANAY). Short sequence motifs (wxxxF/Y motif) lie at residues 348 to 352 (WATEY), 362 to 366 (WADQF), 378 to 382 (WADEF), 396 to 400 (WVNEF), 408 to 412 (WIDEF), and 425 to 429 (WANAY). Positions 392-417 (AEDQWVNEFSKLNVDDWIDEFAEGPV) are amphipathic helix 4 (AH4). TPR repeat units follow at residues 491–524 (AEGW…DPTN), 590–623 (ADVH…KPND), 625–657 (SLWN…KPNY), and 658–691 (VRAW…NPKA).

This sequence belongs to the peroxisomal targeting signal receptor family. In terms of assembly, interacts (via WxxxF/Y and LVxEF motifs) with PEX14; promoting translocation through the PEX13-PEX14 docking complex. Interacts with PEX7, promoting peroxisomal import of proteins containing a C-terminal PTS2-type peroxisomal targeting signal. Interacts with LACS7. In terms of processing, monoubiquitinated at Cys-13 by PEX2 during PEX5 passage through the retrotranslocation channel. Cys-13 monoubiquitination acts as a recognition signal for the PEX1-PEX6 complex and is required for PEX5 extraction and export from peroxisomes. When PEX5 recycling is compromised, polyubiquitinated by PEX10 during its passage through the retrotranslocation channel, leading to its degradation. As to expression, expressed in flowers, siliques, leaves and roots.

The protein resides in the cytoplasm. It localises to the cytosol. Its subcellular location is the peroxisome matrix. Functionally, receptor that mediates peroxisomal import of proteins containing a C-terminal PTS1-type tripeptide peroxisomal targeting signal (SKL-type). Binds to cargo proteins containing a PTS1 peroxisomal targeting signal in the cytosol, and translocates them into the peroxisome matrix by passing through the PEX13-PEX14 docking complex along with cargo proteins. PEX5 receptor is then retrotranslocated into the cytosol, leading to release of bound cargo in the peroxisome matrix, and reset for a subsequent peroxisome import cycle. In addition to promoting peroxisomal translocation of proteins containing a PTS1 peroxisomal targeting signal, mediates peroxisomal import of proteins containing a C-terminal PTS2-type peroxisomal targeting signal via its interaction with PEX7. Interaction with PEX7 only takes place when PEX7 is associated with cargo proteins containing a PTS2 peroxisomal targeting signal. PEX7 along with PTS2-containing cargo proteins are then translocated through the PEX13-PEX14 docking complex together with PEX5. Necessary for the developmental elimination of obsolete peroxisome matrix proteins. The polypeptide is Peroxisome biogenesis protein 5 (PEX5) (Arabidopsis thaliana (Mouse-ear cress)).